The primary structure comprises 405 residues: MQYSEIMVRYGELSTKGKNRMRFINQLKRNMKHVLSIYPEVSIRADRDRAHIYLNGANYVPVAESLKQIFGIQAFSPSYKVEKSVPALEKAVQAIMVELHHEGLTFKISSKRSDHQFELDSRELNQVLGSAVFAVLPDIKAQMNHPNVNLKVEIREEAAYLSYENIKGAGGLPVGTAGKGMLMLSGGIDSPVAGYLALKRGVNIEAVHFASPPYTSPGALKKAQDLTRKLTKFGGNIQFIEVPFTEIQEEIKAKAPEAYLMTLTRRFMMRIADRIREERSGLVIINGESLGQVASQTLESMQAINAVTTTPVIRPVVTMDKLEIIDIAEKIDTFAISIQPFEDCCTIFAPDRPKTNPKIKNVEQYEARLDIEGLVARAVAGINITEITPQEESQDEVDVLIEDLL.

The THUMP domain maps to 60–165 (VPVAESLKQI…EEAAYLSYEN (106 aa)). ATP is bound by residues 183-184 (ML), 208-209 (HF), R265, G287, and Q296.

It belongs to the ThiI family.

It is found in the cytoplasm. The catalysed reaction is [ThiI sulfur-carrier protein]-S-sulfanyl-L-cysteine + a uridine in tRNA + 2 reduced [2Fe-2S]-[ferredoxin] + ATP + H(+) = [ThiI sulfur-carrier protein]-L-cysteine + a 4-thiouridine in tRNA + 2 oxidized [2Fe-2S]-[ferredoxin] + AMP + diphosphate. It catalyses the reaction [ThiS sulfur-carrier protein]-C-terminal Gly-Gly-AMP + S-sulfanyl-L-cysteinyl-[cysteine desulfurase] + AH2 = [ThiS sulfur-carrier protein]-C-terminal-Gly-aminoethanethioate + L-cysteinyl-[cysteine desulfurase] + A + AMP + 2 H(+). Its pathway is cofactor biosynthesis; thiamine diphosphate biosynthesis. Its function is as follows. Catalyzes the ATP-dependent transfer of a sulfur to tRNA to produce 4-thiouridine in position 8 of tRNAs, which functions as a near-UV photosensor. Also catalyzes the transfer of sulfur to the sulfur carrier protein ThiS, forming ThiS-thiocarboxylate. This is a step in the synthesis of thiazole, in the thiamine biosynthesis pathway. The sulfur is donated as persulfide by IscS. This Streptococcus mutans serotype c (strain ATCC 700610 / UA159) protein is Probable tRNA sulfurtransferase.